Reading from the N-terminus, the 740-residue chain is Elongation factor 2 (740 aa).

The region spanning 23–264 (AQIRNAGTLA…MIIEHVPPPN (242 aa)) is the tr-type G domain. GTP-binding positions include 32-39 (AHVDHGKT), 98-102 (DTPGH), and 152-155 (NKID). His605 carries the diphthamide modification.

Belongs to the TRAFAC class translation factor GTPase superfamily. Classic translation factor GTPase family. EF-G/EF-2 subfamily.

Its subcellular location is the cytoplasm. In terms of biological role, catalyzes the GTP-dependent ribosomal translocation step during translation elongation. During this step, the ribosome changes from the pre-translocational (PRE) to the post-translocational (POST) state as the newly formed A-site-bound peptidyl-tRNA and P-site-bound deacylated tRNA move to the P and E sites, respectively. Catalyzes the coordinated movement of the two tRNA molecules, the mRNA and conformational changes in the ribosome. This Pyrobaculum neutrophilum (strain DSM 2338 / JCM 9278 / NBRC 100436 / V24Sta) (Thermoproteus neutrophilus) protein is Elongation factor 2.